Here is a 311-residue protein sequence, read N- to C-terminus: Protoheme IX farnesyltransferase (311 aa).

The next 9 helical transmembrane spans lie at Val32–Asp52, Pro53–Leu73, Ile98–Met118, Val120–Ile140, Ile153–Gly173, Phe180–Phe200, Ile226–Ala246, Ile248–Leu268, and Phe285–Ile305.

It belongs to the UbiA prenyltransferase family. Protoheme IX farnesyltransferase subfamily.

The protein resides in the cell inner membrane. The enzyme catalyses heme b + (2E,6E)-farnesyl diphosphate + H2O = Fe(II)-heme o + diphosphate. It functions in the pathway porphyrin-containing compound metabolism; heme O biosynthesis; heme O from protoheme: step 1/1. Its function is as follows. Converts heme B (protoheme IX) to heme O by substitution of the vinyl group on carbon 2 of heme B porphyrin ring with a hydroxyethyl farnesyl side group. This Bartonella bacilliformis (strain ATCC 35685 / KC583 / Herrer 020/F12,63) protein is Protoheme IX farnesyltransferase.